Consider the following 600-residue polypeptide: MAAPLTAAAALRLGRGLSHRRAFLLRRRYSPAPLAPSPCAAPRCLSSAAHPPPPPPRRLARSGPSRPLAASAATAVSEAQTDLESGPVTASKGRIYHETYGCQMNVNDMEIVLSIMKNEGYDEIVPDPESAEIIFINTCAIRDNAEQKVWQRLNYFWFLKRQWKANVAAGRSRSLRPPKIAVLGCMAERLKEKILDSDKMVDVVCGPDAYRDLPRLLQEVDYGQKGINTLLSLEETYADITPVRISDNSVTAFVSIMRGCNNMCSFCIVPFTRGRERSRPVSSIVREVGELWKAGVKEVMLLGQNVNSYNDTSEVEELEPGKNWELSEGFSSMCKVKNMGLRFADLLDQLSLEYPEMRFRFTSPHPKDYPDELLYLMRDRHNVCKLIHMPAQSGSSAVLERMRRGYTREAYLELVQKIRSIIPDVGLSSDFISGFCGETEEEHAETLTLVRAVGYDMAYMFAYSMREKTHAHRNYVDDVPDDVKQRRLAELISTFRETTAKIYDSQVGTVQLVLVEGPNKRAPETEMIGKTDRGHRVSFASVPVPHTFEGDELRKPVVGDFIEVKITKSSTASLSGDVIARTSLSKFYKNHSSEAHAVAA.

The interval 45–66 (LSSAAHPPPPPPRRLARSGPSR) is disordered. The MTTase N-terminal domain maps to 93 to 222 (GRIYHETYGC…LPRLLQEVDY (130 aa)). Cysteine 102, cysteine 139, cysteine 185, cysteine 260, cysteine 264, and cysteine 267 together coordinate [4Fe-4S] cluster. The region spanning 246-501 (SDNSVTAFVS…ISTFRETTAK (256 aa)) is the Radical SAM core domain. Residues 504–580 (DSQVGTVQLV…TASLSGDVIA (77 aa)) form the TRAM domain.

This sequence belongs to the methylthiotransferase family. MiaB subfamily. [4Fe-4S] cluster serves as cofactor.

Functionally, potential regulator of CDK5 activity. In Oryza sativa subsp. japonica (Rice), this protein is CDK5RAP1-like protein.